Consider the following 444-residue polypeptide: tRNA modification GTPase MnmE (444 aa).

Residues Arg-22, Glu-79, and Arg-118 each contribute to the (6S)-5-formyl-5,6,7,8-tetrahydrofolate site. In terms of domain architecture, TrmE-type G spans 214-368; that stretch reads GMQVVLAGPP…LRDHLKSVMG (155 aa). Residue Asn-224 coordinates K(+). GTP contacts are provided by residues 224–229, 243–249, and 268–271; these read NAGKSS, TEVPGTT, and DTAG. Position 228 (Ser-228) interacts with Mg(2+). K(+)-binding residues include Thr-243, Val-245, and Thr-248. Thr-249 lines the Mg(2+) pocket. Residue Lys-444 coordinates (6S)-5-formyl-5,6,7,8-tetrahydrofolate.

The protein belongs to the TRAFAC class TrmE-Era-EngA-EngB-Septin-like GTPase superfamily. TrmE GTPase family. Homodimer. Heterotetramer of two MnmE and two MnmG subunits. It depends on K(+) as a cofactor.

The protein resides in the cytoplasm. Its function is as follows. Exhibits a very high intrinsic GTPase hydrolysis rate. Involved in the addition of a carboxymethylaminomethyl (cmnm) group at the wobble position (U34) of certain tRNAs, forming tRNA-cmnm(5)s(2)U34. The chain is tRNA modification GTPase MnmE from Alkalilimnicola ehrlichii (strain ATCC BAA-1101 / DSM 17681 / MLHE-1).